Consider the following 139-residue polypeptide: Transcription antitermination protein NusB (139 aa).

Belongs to the NusB family.

In terms of biological role, involved in transcription antitermination. Required for transcription of ribosomal RNA (rRNA) genes. Binds specifically to the boxA antiterminator sequence of the ribosomal RNA (rrn) operons. This is Transcription antitermination protein NusB from Pectobacterium carotovorum subsp. carotovorum (strain PC1).